The following is a 565-amino-acid chain: Periplasmic trehalase (565 aa).

The N-terminal stretch at 1–30 (MKSPAPSRPQKMALIPACIFLCFAALSVQA) is a signal peptide. Substrate-binding positions include arginine 152, 159 to 160 (WD), asparagine 196, 205 to 207 (RSQ), 277 to 279 (RPE), and glycine 310. Residues aspartate 312 and glutamate 496 each act as proton donor/acceptor in the active site. Glutamate 511 is a substrate binding site. A disordered region spans residues 538–565 (PCDNVPATRPTVKSATTQPSTKEAQPTP). A compositionally biased stretch (polar residues) spans 548 to 565 (TVKSATTQPSTKEAQPTP).

Belongs to the glycosyl hydrolase 37 family. In terms of assembly, monomer.

The protein localises to the periplasm. The catalysed reaction is alpha,alpha-trehalose + H2O = alpha-D-glucose + beta-D-glucose. Functionally, provides the cells with the ability to utilize trehalose at high osmolarity by splitting it into glucose molecules that can subsequently be taken up by the phosphotransferase-mediated uptake system. This chain is Periplasmic trehalase, found in Escherichia coli (strain K12 / MC4100 / BW2952).